The following is a 314-amino-acid chain: Methenyltetrahydromethanopterin cyclohydrolase (314 aa).

The protein belongs to the MCH family.

The protein resides in the cytoplasm. It carries out the reaction 5,10-methenyl-5,6,7,8-tetrahydromethanopterin + H2O = N(5)-formyl-5,6,7,8-tetrahydromethanopterin + H(+). The protein operates within one-carbon metabolism; methanogenesis from CO(2); 5,10-methenyl-5,6,7,8-tetrahydromethanopterin from CO(2): step 3/3. In terms of biological role, catalyzes the reversible interconversion of 5-formyl-H(4)MPT to methenyl-H(4)MPT(+). This Methanocorpusculum labreanum (strain ATCC 43576 / DSM 4855 / Z) protein is Methenyltetrahydromethanopterin cyclohydrolase.